The following is an 804-amino-acid chain: Phenylalanine--tRNA ligase beta subunit (804 aa).

Residues 38 to 148 enclose the tRNA-binding domain; it reads RAAFRAFTIA…ENAPVGTSFA (111 aa). The B5 domain occupies 401–476; it reads HTARVIDFPV…RIHGINRIDP (76 aa). Residues Asp-454, Asp-460, Glu-463, and Glu-464 each contribute to the Mg(2+) site. One can recognise an FDX-ACB domain in the interval 710-803; the sequence is SLFQSLKRDY…VAKQTGGVLR (94 aa).

This sequence belongs to the phenylalanyl-tRNA synthetase beta subunit family. Type 1 subfamily. In terms of assembly, tetramer of two alpha and two beta subunits. Mg(2+) serves as cofactor.

The protein resides in the cytoplasm. The enzyme catalyses tRNA(Phe) + L-phenylalanine + ATP = L-phenylalanyl-tRNA(Phe) + AMP + diphosphate + H(+). This chain is Phenylalanine--tRNA ligase beta subunit, found in Brucella abortus (strain 2308).